Here is a 258-residue protein sequence, read N- to C-terminus: Lyso-ornithine lipid O-acyltransferase (258 aa).

Residues 7–29 (LLRSARLLGLVALGLGLAAWVSL) traverse the membrane as a helical segment.

This sequence belongs to the 1-acyl-sn-glycerol-3-phosphate acyltransferase family. OlsA subfamily.

The protein localises to the membrane. It catalyses the reaction a lyso-ornithine lipid + a fatty acyl-[ACP] = an N(2)-[(3R)-3-(acyloxy)acyl]-L-ornithine lipid + holo-[ACP]. It participates in lipid metabolism. Catalyzes the second step in the formation of ornithine lipids, which are phosphorus-free membrane lipids. Uses acyl-acyl carrier protein (acyl-AcpP) as an acyl donor and converts lyso-ornithine lipid (LOL) into ornithine lipid (OL). This Pseudomonas aeruginosa (strain ATCC 15692 / DSM 22644 / CIP 104116 / JCM 14847 / LMG 12228 / 1C / PRS 101 / PAO1) protein is Lyso-ornithine lipid O-acyltransferase.